Consider the following 230-residue polypeptide: Urease accessory protein UreF (230 aa).

The protein belongs to the UreF family. In terms of assembly, ureD, UreF and UreG form a complex that acts as a GTP-hydrolysis-dependent molecular chaperone, activating the urease apoprotein by helping to assemble the nickel containing metallocenter of UreC. The UreE protein probably delivers the nickel.

The protein resides in the cytoplasm. Functionally, required for maturation of urease via the functional incorporation of the urease nickel metallocenter. The sequence is that of Urease accessory protein UreF from Polynucleobacter asymbioticus (strain DSM 18221 / CIP 109841 / QLW-P1DMWA-1) (Polynucleobacter necessarius subsp. asymbioticus).